The following is a 292-amino-acid chain: Sulfofructosephosphate aldolase (292 aa).

K193 acts as the Schiff-base intermediate with substrate in catalysis.

This sequence belongs to the aldolase LacD family. Homotetramer.

It carries out the reaction 6-deoxy-6-sulfo-D-fructose 1-phosphate = (2S)-3-sulfolactaldehyde + dihydroxyacetone phosphate. In terms of biological role, cleaves 6-deoxy-6-sulfo-D-fructose 1-phosphate (SFP) to form dihydroxyacetone phosphate (DHAP) and 3-sulfolactaldehyde (SLA). This Salmonella typhi protein is Sulfofructosephosphate aldolase (yihT).